The primary structure comprises 637 residues: Glutamate--cysteine ligase catalytic subunit (637 aa).

Met1 is modified (N-acetylmethionine). Ser5 and Ser8 each carry phosphoserine.

Belongs to the glutamate--cysteine ligase type 3 family. Heterodimer of a catalytic heavy chain and a regulatory light chain.

It catalyses the reaction L-cysteine + L-glutamate + ATP = gamma-L-glutamyl-L-cysteine + ADP + phosphate + H(+). It carries out the reaction (2S)-2-aminobutanoate + L-glutamate + ATP = gamma-L-glutamyl-(2S)-2-aminobutanoate + ADP + phosphate + H(+). It participates in sulfur metabolism; glutathione biosynthesis; glutathione from L-cysteine and L-glutamate: step 1/2. Its activity is regulated as follows. Feedback inhibition by glutathione. In terms of biological role, catalyzes the ATP-dependent ligation of L-glutamate and L-cysteine and participates in the first and rate-limiting step in glutathione biosynthesis. The chain is Glutamate--cysteine ligase catalytic subunit from Homo sapiens (Human).